A 156-amino-acid polypeptide reads, in one-letter code: Ribosomal RNA large subunit methyltransferase H (156 aa).

Residues leucine 73, glycine 104, and 123–128 (LSALTL) contribute to the S-adenosyl-L-methionine site.

This sequence belongs to the RNA methyltransferase RlmH family. In terms of assembly, homodimer.

The protein resides in the cytoplasm. It carries out the reaction pseudouridine(1915) in 23S rRNA + S-adenosyl-L-methionine = N(3)-methylpseudouridine(1915) in 23S rRNA + S-adenosyl-L-homocysteine + H(+). Its function is as follows. Specifically methylates the pseudouridine at position 1915 (m3Psi1915) in 23S rRNA. The chain is Ribosomal RNA large subunit methyltransferase H from Shewanella woodyi (strain ATCC 51908 / MS32).